Consider the following 202-residue polypeptide: Imidazoleglycerol-phosphate dehydratase (202 aa).

Belongs to the imidazoleglycerol-phosphate dehydratase family.

It localises to the cytoplasm. It catalyses the reaction D-erythro-1-(imidazol-4-yl)glycerol 3-phosphate = 3-(imidazol-4-yl)-2-oxopropyl phosphate + H2O. It participates in amino-acid biosynthesis; L-histidine biosynthesis; L-histidine from 5-phospho-alpha-D-ribose 1-diphosphate: step 6/9. In Rhizobium etli (strain ATCC 51251 / DSM 11541 / JCM 21823 / NBRC 15573 / CFN 42), this protein is Imidazoleglycerol-phosphate dehydratase.